Here is a 236-residue protein sequence, read N- to C-terminus: Orotidine 5'-phosphate decarboxylase (236 aa).

Substrate is bound by residues Asp-17, Lys-39, Asp-66 to Thr-75, Thr-125, Arg-186, Gln-195, Gly-215, and Arg-216. Lys-68 (proton donor) is an active-site residue.

The protein belongs to the OMP decarboxylase family. Type 1 subfamily. Homodimer.

It carries out the reaction orotidine 5'-phosphate + H(+) = UMP + CO2. It participates in pyrimidine metabolism; UMP biosynthesis via de novo pathway; UMP from orotate: step 2/2. Its function is as follows. Catalyzes the decarboxylation of orotidine 5'-monophosphate (OMP) to uridine 5'-monophosphate (UMP). The sequence is that of Orotidine 5'-phosphate decarboxylase from Buchnera aphidicola subsp. Acyrthosiphon pisum (strain APS) (Acyrthosiphon pisum symbiotic bacterium).